The primary structure comprises 246 residues: Small ribosomal subunit protein uS3 (246 aa).

A KH type-2 domain is found at isoleucine 19 to alanine 98. Positions leucine 218–serine 246 are disordered. The segment covering leucine 226–glutamate 237 has biased composition (basic and acidic residues).

This sequence belongs to the universal ribosomal protein uS3 family. As to quaternary structure, part of the 30S ribosomal subunit.

Binds the lower part of the 30S subunit head. This is Small ribosomal subunit protein uS3 from Aeropyrum pernix (strain ATCC 700893 / DSM 11879 / JCM 9820 / NBRC 100138 / K1).